A 211-amino-acid chain; its full sequence is Thiamine-phosphate synthase (211 aa).

4-amino-2-methyl-5-(diphosphooxymethyl)pyrimidine contacts are provided by residues Gln37–Lys41 and Asn69. Mg(2+) contacts are provided by Asp70 and Asp89. Ser108 provides a ligand contact to 4-amino-2-methyl-5-(diphosphooxymethyl)pyrimidine. Thr134–Thr136 provides a ligand contact to 2-[(2R,5Z)-2-carboxy-4-methylthiazol-5(2H)-ylidene]ethyl phosphate. A 4-amino-2-methyl-5-(diphosphooxymethyl)pyrimidine-binding site is contributed by Lys137. 2-[(2R,5Z)-2-carboxy-4-methylthiazol-5(2H)-ylidene]ethyl phosphate contacts are provided by residues Gly166 and Val186 to Ser187.

Belongs to the thiamine-phosphate synthase family. It depends on Mg(2+) as a cofactor.

It catalyses the reaction 2-[(2R,5Z)-2-carboxy-4-methylthiazol-5(2H)-ylidene]ethyl phosphate + 4-amino-2-methyl-5-(diphosphooxymethyl)pyrimidine + 2 H(+) = thiamine phosphate + CO2 + diphosphate. It carries out the reaction 2-(2-carboxy-4-methylthiazol-5-yl)ethyl phosphate + 4-amino-2-methyl-5-(diphosphooxymethyl)pyrimidine + 2 H(+) = thiamine phosphate + CO2 + diphosphate. The enzyme catalyses 4-methyl-5-(2-phosphooxyethyl)-thiazole + 4-amino-2-methyl-5-(diphosphooxymethyl)pyrimidine + H(+) = thiamine phosphate + diphosphate. The protein operates within cofactor biosynthesis; thiamine diphosphate biosynthesis; thiamine phosphate from 4-amino-2-methyl-5-diphosphomethylpyrimidine and 4-methyl-5-(2-phosphoethyl)-thiazole: step 1/1. Functionally, condenses 4-methyl-5-(beta-hydroxyethyl)thiazole monophosphate (THZ-P) and 2-methyl-4-amino-5-hydroxymethyl pyrimidine pyrophosphate (HMP-PP) to form thiamine monophosphate (TMP). In Shigella dysenteriae serotype 1 (strain Sd197), this protein is Thiamine-phosphate synthase.